The chain runs to 306 residues: Agmatinase (306 aa).

Positions 126, 149, 151, 153, 230, and 232 each coordinate Mn(2+).

The protein belongs to the arginase family. Agmatinase subfamily. The cofactor is Mn(2+).

It catalyses the reaction agmatine + H2O = urea + putrescine. It functions in the pathway amine and polyamine biosynthesis; putrescine biosynthesis via agmatine pathway; putrescine from agmatine: step 1/1. Functionally, catalyzes the formation of putrescine from agmatine. The protein is Agmatinase of Escherichia coli (strain SE11).